The sequence spans 690 residues: ATP-dependent DNA helicase Hel308 (690 aa).

ATP contacts are provided by residues Gln26 and 45–52 (IPTASGKT). Residues 32–188 (AGYLESEDNY…WLDARVVEHD (157 aa)) form the Helicase ATP-binding domain. A DEAH box motif is present at residues 133–136 (DEFH). The Helicase C-terminal domain occupies 208 to 417 (EKNDVVLKVL…NRDALYRQII (210 aa)).

This sequence belongs to the helicase family. Hel308 subfamily. As to quaternary structure, monomer. Binds replication protein A (RPA), in presence and absence of DNA.

It carries out the reaction Couples ATP hydrolysis with the unwinding of duplex DNA by translocating in the 3'-5' direction.. The enzyme catalyses ATP + H2O = ADP + phosphate + H(+). DNA-dependent ATPase and 3'-5' DNA helicase that may be involved in repair of stalled replication forks. Helicase with 3'-to 5'- polarity; able to unwind over 100 bp of DNA at 50 degrees Celsius. Unwinds forked DNA, preferentially on lagging strand forks; has weaker activity on Holliday junctions. Displaces the invading strand in DNA D-loops. Unwinds short oligonucleotides from dsDNA with 3'- but not blunt ends or 5'-ssDNA tails in an ATP-dependent manner. ATPase activity is stimulated by ssDNA but not dsDNA, protein binds ssDNA, dsDNA with 5'- or 3'-overhangs but not blunt ended dsDNA and replication forks. Replication forks bind both this protein and RPA. RPA does not stimulate the helicase activity of this protein. The chain is ATP-dependent DNA helicase Hel308 from Methanothermobacter thermautotrophicus (strain ATCC 29096 / DSM 1053 / JCM 10044 / NBRC 100330 / Delta H) (Methanobacterium thermoautotrophicum).